A 59-amino-acid polypeptide reads, in one-letter code: MDHRLLEIVACPVCKGKLNYDKEKNELICKFDRLAYPIQDGIPVLIEPEARTLSSDEVK.

Belongs to the UPF0434 family.

The protein is UPF0434 protein PBPRA2383 of Photobacterium profundum (strain SS9).